Here is a 198-residue protein sequence, read N- to C-terminus: Recombination protein RecR (198 aa).

The C4-type zinc-finger motif lies at 57-72; the sequence is CSVCGHITENDPCYIC. In terms of domain architecture, Toprim spans 80 to 175; the sequence is SVICVVEDDK…KVTRLAQGLS (96 aa).

Belongs to the RecR family.

May play a role in DNA repair. It seems to be involved in an RecBC-independent recombinational process of DNA repair. It may act with RecF and RecO. The protein is Recombination protein RecR of Staphylococcus aureus (strain Mu3 / ATCC 700698).